Reading from the N-terminus, the 234-residue chain is Peptidase E (234 aa).

Catalysis depends on charge relay system residues Ser-123, Asp-138, and His-160.

Belongs to the peptidase S51 family.

Its subcellular location is the cytoplasm. The catalysed reaction is Dipeptidase E catalyzes the hydrolysis of dipeptides Asp-|-Xaa. It does not act on peptides with N-terminal Glu, Asn or Gln, nor does it cleave isoaspartyl peptides.. Its function is as follows. Hydrolyzes dipeptides containing N-terminal aspartate residues. May play a role in allowing the cell to use peptide aspartate to spare carbon otherwise required for the synthesis of the aspartate family of amino acids. This chain is Peptidase E, found in Actinobacillus pleuropneumoniae serotype 3 (strain JL03).